A 1612-amino-acid chain; its full sequence is DNA (cytosine-5)-methyltransferase PliMCI (1612 aa).

Positions 7-101 (CDQVIPPNVR…NGDTKEEASS (95 aa)) constitute a DMAP1-binding domain. The disordered stretch occupies residues 87 to 338 (TCSPVNGDTK…TAESKQPPLR (252 aa)). Residues 94–110 (DTKEEASSNGKDDEKAE) show a composition bias toward basic and acidic residues. Residues 115–131 (NGTTSNGSTTNGSSGSS) show a composition bias toward low complexity. The span at 132–142 (KANGHTNGGYV) shows a compositional bias: polar residues. Residues 143–154 (QSSSQEETGTSQ) show a composition bias toward low complexity. Composition is skewed to basic and acidic residues over residues 193 to 212 (VLGD…KKDV), 222 to 232 (EESATPDEKTL), and 260 to 289 (KKEE…KKEE). Residues 626 to 672 (ASERKKRCGVCEICQAPDCGKCTACKDMIKFGGSGKAKQACKDRRCP) form a CXXC-type zinc finger. 8 residues coordinate Zn(2+): C633, C636, C639, C644, C647, C650, C666, and C671. The interval 677 to 708 (QEADENDIDEMDNSSNKENKDEKKAKKGRKLE) is disordered. Acidic residues predominate over residues 678-688 (EADENDIDEMD). The segment covering 691–708 (SNKENKDEKKAKKGRKLE) has biased composition (basic and acidic residues). BAH domains follow at residues 743-871 (EKIE…EDYE) and 967-1089 (NYRK…EDPP). The segment at 1084-1121 (CFEDPPSKSRSTRMKGKGKGKGKGKAKGKIAVEKEEEK) is disordered. Basic residues predominate over residues 1093–1111 (RSTRMKGKGKGKGKGKAKG). The 460-residue stretch at 1131 to 1590 (LKCLDVFAGC…MEIKVCLQTK (460 aa)) folds into the SAM-dependent MTase C5-type domain. S-adenosyl-L-methionine is bound by residues 1142–1143 (GL), 1160–1161 (EK), 1182–1183 (DC), and C1183. C1218 is a catalytic residue. The S-adenosyl-L-methionine site is built by N1569 and V1571.

Belongs to the class I-like SAM-binding methyltransferase superfamily. C5-methyltransferase family.

The protein resides in the nucleus. It carries out the reaction a 2'-deoxycytidine in DNA + S-adenosyl-L-methionine = a 5-methyl-2'-deoxycytidine in DNA + S-adenosyl-L-homocysteine + H(+). In terms of biological role, methylates CpG residues. This chain is DNA (cytosine-5)-methyltransferase PliMCI (DNMT), found in Paracentrotus lividus (Common sea urchin).